A 796-amino-acid polypeptide reads, in one-letter code: Inactive dipeptidyl peptidase 10 (796 aa).

At 1–34 the chain is on the cytoplasmic side; that stretch reads MNQTASVSHHIKCQPSKTIKELGSNSPPQRNWKG. The tract at residues 1–55 is mediates effects on KCND2; the sequence is MNQTASVSHHIKCQPSKTIKELGSNSPPQRNWKGIAIALLVILVVCSLITMSVIL. The chain crosses the membrane as a helical; Signal-anchor for type II membrane protein span at residues 35 to 55; that stretch reads IAIALLVILVVCSLITMSVIL. The Extracellular portion of the chain corresponds to 56 to 796; sequence LTPDELTNSS…VLPQEPEEDE (741 aa). Residues Asn63, Asn90, Asn111, and Asn119 are each glycosylated (N-linked (GlcNAc...) asparagine). 2 positions are modified to phosphotyrosine: Tyr138 and Tyr143. N-linked (GlcNAc...) asparagine glycans are attached at residues Asn257, Asn342, and Asn748.

Belongs to the peptidase S9B family. DPPIV subfamily. In terms of assembly, may form oligomers. Interacts with KCND1. Interacts with KCND2. Identified in a complex with KCND2 and KCNIP3. Post-translationally, N-glycosylation is important for cell surface expression, specially at Asn-257, which is crucial. As to expression, detected in brain cortex, hippocampus, thalamus and cerebellum Purkinje cells (at protein level).

It localises to the cell membrane. Its function is as follows. Promotes cell surface expression of the potassium channel KCND2. Modulates the activity and gating characteristics of the potassium channel KCND2. Has no dipeptidyl aminopeptidase activity. In Rattus norvegicus (Rat), this protein is Inactive dipeptidyl peptidase 10 (Dpp10).